The chain runs to 405 residues: Arginine deiminase (405 aa).

Cysteine 395 acts as the Amidino-cysteine intermediate in catalysis.

Belongs to the arginine deiminase family.

It localises to the cytoplasm. The enzyme catalyses L-arginine + H2O = L-citrulline + NH4(+). It participates in amino-acid degradation; L-arginine degradation via ADI pathway; carbamoyl phosphate from L-arginine: step 1/2. The sequence is that of Arginine deiminase from Rhodococcus opacus (strain B4).